The primary structure comprises 219 residues: Abasic site processing protein YobE (219 aa).

Residue cysteine 2 is the Nucleophile of the active site. Residue cysteine 2 is modified to Thiazolidine linkage to a ring-opened DNA abasic site. The active site involves glutamate 106.

The protein belongs to the SOS response-associated peptidase family.

Its activity is regulated as follows. Formation and reversal of DNA-protein cross-link depends on DNA context. Catalyzes formation of the thiazolidine linkage in presence of abasic sites in single-stranded DNA. Mediates the reversal of the thiazolidine cross-link in presence of double stranded DNA. Functionally, sensor of abasic sites in single-stranded DNA (ssDNA) required to preserve genome integrity by promoting error-free repair of abasic sites. Recognizes and binds abasic sites in ssDNA at replication forks and chemically modifies the lesion by forming a covalent cross-link with DNA: forms a stable thiazolidine linkage between a ring-opened abasic site and the alpha-amino and sulfhydryl substituents of its N-terminal catalytic cysteine residue. The DNA-protein cross-link is then reversed: able to catalyze the reversal of the thiazolidine cross-link and cycle between a cross-link and a non-cross-linked state depending on DNA context: mediates self-reversal of the thiazolidine cross-link in double stranded DNA. May act as a protease: mediates autocatalytic processing of its N-terminal methionine in order to expose the catalytic cysteine. This Bacillus subtilis (strain 168) protein is Abasic site processing protein YobE (yobE).